Consider the following 385-residue polypeptide: 1-deoxy-D-xylulose 5-phosphate reductoisomerase 1 (385 aa).

Residues Thr11, Gly12, Ser13, Ile14, Asn39, and Asn122 each coordinate NADPH. Lys123 serves as a coordination point for 1-deoxy-D-xylulose 5-phosphate. Glu124 lines the NADPH pocket. Mn(2+) is bound at residue Asp148. Residues Ser149, Glu150, Ser174, and His197 each coordinate 1-deoxy-D-xylulose 5-phosphate. A Mn(2+)-binding site is contributed by Glu150. Gly203 contributes to the NADPH binding site. 1-deoxy-D-xylulose 5-phosphate contacts are provided by Ser210, Asn215, Lys216, and Glu219. A Mn(2+)-binding site is contributed by Glu219.

It belongs to the DXR family. It depends on Mg(2+) as a cofactor. Mn(2+) serves as cofactor.

It catalyses the reaction 2-C-methyl-D-erythritol 4-phosphate + NADP(+) = 1-deoxy-D-xylulose 5-phosphate + NADPH + H(+). Its pathway is isoprenoid biosynthesis; isopentenyl diphosphate biosynthesis via DXP pathway; isopentenyl diphosphate from 1-deoxy-D-xylulose 5-phosphate: step 1/6. In terms of biological role, catalyzes the NADPH-dependent rearrangement and reduction of 1-deoxy-D-xylulose-5-phosphate (DXP) to 2-C-methyl-D-erythritol 4-phosphate (MEP). The protein is 1-deoxy-D-xylulose 5-phosphate reductoisomerase 1 of Bacillus cereus (strain ATCC 14579 / DSM 31 / CCUG 7414 / JCM 2152 / NBRC 15305 / NCIMB 9373 / NCTC 2599 / NRRL B-3711).